Reading from the N-terminus, the 307-residue chain is Cuticle collagen 36 (307 aa).

Disordered stretches follow at residues 76 to 102 (TRSR…GGPT) and 116 to 307 (QQGP…PPGY). A compositionally biased stretch (gly residues) spans 86–102 (EGSGSGGSGSGGYGGPT). Triple-helical region stretches follow at residues 89 to 105 (GSGG…TGAG), 118 to 150 (GPAG…EGSI), 167 to 187 (GPQG…KGKS), 194 to 226 (GKNG…PGRV), 231 to 257 (GAAG…AGLT), and 260 to 295 (GGQG…EGSC). Residues 157–168 (PSEPCIICPPGP) are compositionally biased toward pro residues. Positions 186 to 196 (KSQERAADGKN) are enriched in basic and acidic residues. A compositionally biased stretch (pro residues) spans 202 to 220 (IGPPGPPGGVGEPGPPGPA). The segment covering 231–242 (GAAGPAGPRGVK) has biased composition (low complexity). Positions 258 to 278 (EIGGQGPPGDAGGPGPVGGQG) are enriched in gly residues. Over residues 279–288 (PPGPQGPQGP) the composition is skewed to pro residues.

The protein belongs to the cuticular collagen family. In terms of assembly, collagen polypeptide chains are complexed within the cuticle by disulfide bonds and other types of covalent cross-links.

Nematode cuticles are composed largely of collagen-like proteins. The cuticle functions both as an exoskeleton and as a barrier to protect the worm from its environment. The protein is Cuticle collagen 36 (col-36) of Caenorhabditis elegans.